A 74-amino-acid chain; its full sequence is RNA-binding protein Hfq (74 aa).

One can recognise a Sm domain in the interval 9-69 (DQFLNQLRKE…ISTFMPQKNV (61 aa)).

Belongs to the Hfq family. Homohexamer.

Its function is as follows. RNA chaperone that binds small regulatory RNA (sRNAs) and mRNAs to facilitate mRNA translational regulation in response to envelope stress, environmental stress and changes in metabolite concentrations. Also binds with high specificity to tRNAs. The protein is RNA-binding protein Hfq of Bacillus cytotoxicus (strain DSM 22905 / CIP 110041 / 391-98 / NVH 391-98).